The primary structure comprises 288 residues: MLKKISFKKLELKPELENKNESTIIPCAPKELLLICPKCKKTLLKSELADNLDVCRECGYHFRISARKRIGITVDNETFVEYDRELRSKNILNFPGYDEKLKTAIKENGENEAVICGIGKIEGFECAIFAMEPFFMMGSMGCVVGEKIARLFELATDKSIPVIGFTVSGGARMQEGIMSLMQMAKISGAVKRHSNNGNLYVAVLTDPTTGGVTASFAMQGDIIVSEPDTLIGFAGPRVIEQTIRRSLPDGFQRAEFLMERGFLDSIVGRNELKKYLGNILMLHNVEAR.

The region spanning 32–288 (LLLICPKCKK…ILMLHNVEAR (257 aa)) is the CoA carboxyltransferase N-terminal domain. Positions 36, 39, 55, and 58 each coordinate Zn(2+). The segment at 36–58 (CPKCKKTLLKSELADNLDVCREC) adopts a C4-type zinc-finger fold.

It belongs to the AccD/PCCB family. As to quaternary structure, acetyl-CoA carboxylase is a heterohexamer composed of biotin carboxyl carrier protein (AccB), biotin carboxylase (AccC) and two subunits each of ACCase subunit alpha (AccA) and ACCase subunit beta (AccD). It depends on Zn(2+) as a cofactor.

Its subcellular location is the cytoplasm. The catalysed reaction is N(6)-carboxybiotinyl-L-lysyl-[protein] + acetyl-CoA = N(6)-biotinyl-L-lysyl-[protein] + malonyl-CoA. It functions in the pathway lipid metabolism; malonyl-CoA biosynthesis; malonyl-CoA from acetyl-CoA: step 1/1. Functionally, component of the acetyl coenzyme A carboxylase (ACC) complex. Biotin carboxylase (BC) catalyzes the carboxylation of biotin on its carrier protein (BCCP) and then the CO(2) group is transferred by the transcarboxylase to acetyl-CoA to form malonyl-CoA. In Ruminiclostridium cellulolyticum (strain ATCC 35319 / DSM 5812 / JCM 6584 / H10) (Clostridium cellulolyticum), this protein is Acetyl-coenzyme A carboxylase carboxyl transferase subunit beta.